Here is a 205-residue protein sequence, read N- to C-terminus: Pyrrolidone-carboxylate peptidase (205 aa).

Residues E79, C142, and H165 contribute to the active site.

It belongs to the peptidase C15 family. As to quaternary structure, homotetramer.

Its subcellular location is the cytoplasm. The catalysed reaction is Release of an N-terminal pyroglutamyl group from a polypeptide, the second amino acid generally not being Pro.. Removes 5-oxoproline from various penultimate amino acid residues except L-proline. The sequence is that of Pyrrolidone-carboxylate peptidase from Gloeobacter violaceus (strain ATCC 29082 / PCC 7421).